The chain runs to 224 residues: Urease accessory protein UreF (224 aa).

Belongs to the UreF family. In terms of assembly, ureD, UreF and UreG form a complex that acts as a GTP-hydrolysis-dependent molecular chaperone, activating the urease apoprotein by helping to assemble the nickel containing metallocenter of UreC. The UreE protein probably delivers the nickel.

It localises to the cytoplasm. Functionally, required for maturation of urease via the functional incorporation of the urease nickel metallocenter. The polypeptide is Urease accessory protein UreF (Pseudomonas savastanoi pv. phaseolicola (strain 1448A / Race 6) (Pseudomonas syringae pv. phaseolicola (strain 1448A / Race 6))).